Reading from the N-terminus, the 333-residue chain is Fructose-1,6-bisphosphatase class 1 (333 aa).

Mg(2+)-binding residues include Glu-92, Asp-113, Leu-115, and Asp-116. Substrate is bound by residues 116 to 119 (DGSS), Asn-209, Tyr-242, and Lys-272. Glu-278 serves as a coordination point for Mg(2+).

The protein belongs to the FBPase class 1 family. Homotetramer. The cofactor is Mg(2+).

Its subcellular location is the cytoplasm. It catalyses the reaction beta-D-fructose 1,6-bisphosphate + H2O = beta-D-fructose 6-phosphate + phosphate. It participates in carbohydrate biosynthesis; Calvin cycle. This chain is Fructose-1,6-bisphosphatase class 1, found in Pelodictyon phaeoclathratiforme (strain DSM 5477 / BU-1).